Consider the following 2506-residue polypeptide: Highly reducing polyketide synthase rstn3 (2506 aa).

The 429-residue stretch at 8 to 436 (VEPIAIVGMA…GANAHAILDA (429 aa)) folds into the Ketosynthase family 3 (KS3) domain. Residues Cys-183, His-318, and His-358 each act as for beta-ketoacyl synthase activity in the active site. Residues 547-875 (FIFTGQGAQW…KMVGSLFLSG (329 aa)) enclose the Malonyl-CoA:ACP transacylase (MAT) domain. Residues 941–1050 (HDLLGSRLPG…ASDQSISSVE (110 aa)) form an N-terminal hotdog fold region. A PKS/mFAS DH domain is found at 941–1212 (HDLLGSRLPG…FSSLETAVGE (272 aa)). Residue His-973 is the Proton acceptor; for dehydratase activity of the active site. The interval 1060–1212 (NKDSYDRRWY…FSSLETAVGE (153 aa)) is C-terminal hotdog fold. Asp-1125 functions as the Proton donor; for dehydratase activity in the catalytic mechanism. The interval 1263-1563 (VTRLAIRSSA…SGADIVLDDY (301 aa)) is methyltransferase (CMet) domain. Residues 1827-2093 (GRVDSFYFKE…QDDYVGRVVL (267 aa)) form the Enoyl reductase (ER) domain. Positions 2116-2296 (ASYLLIGCLG…QATSIALGMI (181 aa)) constitute a Ketoreductase (KR) domain. One can recognise a Carrier domain in the interval 2423-2501 (AVKVTTLGLI…DLAEKVVALA (79 aa)). At Ser-2460 the chain carries O-(pantetheine 4'-phosphoryl)serine.

Requires pantetheine 4'-phosphate as cofactor.

Its pathway is antifungal biosynthesis. Its function is as follows. Highly reducing polyketide synthase; part of the gene cluster that mediates the biosynthesis of the tetrahydropyranyl antifungal agent restricticin that acts as an inhibitor of CYP51 and blocks the ergosterol biosynthesis. The highly reducing polyketide synthase rstn3, the short chain dehydrogenase rstn4, the cyclase rstn5, the FAD-dependent monooxygenase rstn6 and the enoylreductase rstn7 are required to generate the first stable intermediate desmethylrestrictinol. Rstn3 with rstn7 biosynthesize the first polyketide chain intermediate that is reduced by rstn4, followed by epoxidation by rstn6 before 6-endo cyclization via epoxide opening by rstn5 leads to desmethylrestrictinol. The methyltransferase rstn1 then catalyzes the C4 O-methylation of desmethylrestrictinol to produce restrictinol, and the nonribosomal peptide synthetase rstn8 catalyzes the C3 esterification of restrictinol with glycine that leads to restricticin. The protein is Highly reducing polyketide synthase rstn3 of Aspergillus nomiae NRRL (strain ATCC 15546 / NRRL 13137 / CBS 260.88 / M93).